The following is a 227-amino-acid chain: N-acetyltransferase 8 (227 aa).

The Cytoplasmic portion of the chain corresponds to 1–42 (MAPCHIRKYQESDRQWVVGLLSRGMAEHAPATFRQLLKLPRT). The chain crosses the membrane as a helical; Signal-anchor for type II membrane protein span at residues 43 to 63 (LILLLGGPLALLLVSGSWLLA). The N-acetyltransferase domain maps to 61–220 (LLALVFSISL…HTVHFIYHLP (160 aa)). Residues 64 to 227 (LVFSISLFPA…HLPSSKVGSL (164 aa)) lie on the Lumenal side of the membrane.

The protein belongs to the NAT8 family. In terms of tissue distribution, preferentially expressed in liver and kidney. Also detected in brain (at protein level).

It localises to the endoplasmic reticulum-Golgi intermediate compartment membrane. It is found in the endoplasmic reticulum membrane. It carries out the reaction L-lysyl-[protein] + acetyl-CoA = N(6)-acetyl-L-lysyl-[protein] + CoA + H(+). The enzyme catalyses an S-substituted L-cysteine + acetyl-CoA = an N-acetyl-L-cysteine-S-conjugate + CoA + H(+). The protein operates within sulfur metabolism; glutathione metabolism. In terms of biological role, endoplasmic reticulum (ER)-membrane-bound lysine N-acetyltransferase catalyzing the N6-acetylation of lysine residues in the lumen of the ER in various proteins, including PROM1 and BACE1, using acetyl-CoA as acetyl donor. Thereby, may regulate apoptosis through the acetylation and the regulation of the expression of PROM1. May also regulate amyloid beta-peptide secretion through acetylation of BACE1 and the regulation of its expression in neurons. N(6)-lysine acetylation in the ER maintains protein homeostasis and regulates reticulophagy. Alternatively, acetylates the free alpha-amino group of cysteine S-conjugates to form mercapturic acids. This is the final step in a major route for detoxification of a wide variety of reactive electrophiles which starts with their incorporation into glutathione S-conjugates. The glutathione S-conjugates are then further processed into cysteine S-conjugates and finally mercapturic acids which are water soluble and can be readily excreted in urine or bile. This chain is N-acetyltransferase 8, found in Homo sapiens (Human).